A 333-amino-acid polypeptide reads, in one-letter code: DNA-directed RNA polymerase subunit alpha (333 aa).

The tract at residues methionine 1–glutamate 233 is alpha N-terminal domain (alpha-NTD). An alpha C-terminal domain (alpha-CTD) region spans residues isoleucine 269–alanine 333.

It belongs to the RNA polymerase alpha chain family. In plastids the minimal PEP RNA polymerase catalytic core is composed of four subunits: alpha, beta, beta', and beta''. When a (nuclear-encoded) sigma factor is associated with the core the holoenzyme is formed, which can initiate transcription.

Its subcellular location is the plastid. It localises to the chloroplast. It carries out the reaction RNA(n) + a ribonucleoside 5'-triphosphate = RNA(n+1) + diphosphate. Its function is as follows. DNA-dependent RNA polymerase catalyzes the transcription of DNA into RNA using the four ribonucleoside triphosphates as substrates. The polypeptide is DNA-directed RNA polymerase subunit alpha (Cucumis sativus (Cucumber)).